Here is a 266-residue protein sequence, read N- to C-terminus: Small ribosomal subunit protein uS2 (266 aa).

The disordered stretch occupies residues 229-254 (RTSDKEADTTTEEVAQEEVTDTKADE). Residues 237 to 247 (TTTEEVAQEEV) are compositionally biased toward acidic residues.

Belongs to the universal ribosomal protein uS2 family.

This is Small ribosomal subunit protein uS2 from Flavobacterium psychrophilum (strain ATCC 49511 / DSM 21280 / CIP 103535 / JIP02/86).